We begin with the raw amino-acid sequence, 306 residues long: Palmitoyl-protein thioesterase 1 (306 aa).

Residues 1-27 (MASPGCLWLLAVALLPWTCASRALQHL) form the signal peptide. Residue cysteine 6 is the site of S-palmitoyl cysteine; by ZDHHC3 and ZDHHC7 attachment. 3 disulfides stabilise this stretch: cysteine 45–cysteine 46, cysteine 96–cysteine 128, and cysteine 152–cysteine 160. Serine 115 is an active-site residue. N-linked (GlcNAc...) asparagine glycans are attached at residues asparagine 197, asparagine 212, and asparagine 232. Catalysis depends on residues aspartate 233 and histidine 289.

Belongs to the palmitoyl-protein thioesterase family. As to quaternary structure, interacts with CLN5. Interacts with ATP5F1A and ATP5F1B. In terms of processing, glycosylated.

The protein localises to the lysosome. It is found in the secreted. The protein resides in the golgi apparatus. It localises to the endoplasmic reticulum. The catalysed reaction is S-hexadecanoyl-L-cysteinyl-[protein] + H2O = L-cysteinyl-[protein] + hexadecanoate + H(+). It carries out the reaction hexadecanoyl-CoA + H2O = hexadecanoate + CoA + H(+). The enzyme catalyses S-hexadecanoyl-N-acetylcysteamine + H2O = N-acetylcysteamine + hexadecanoate + H(+). It catalyses the reaction S-hexadecanoyl-N-acetylcysteine methyl ester + H2O = N-acetylcysteine methyl ester + hexadecanoate + H(+). Palmitoylation reduces PPT1 enzymatic activity. Its function is as follows. Has thioesterase activity against fatty acid thioesters with 14 -18 carbons, including palmitoyl-CoA, S-palmitoyl-N-acetylcysteamine, and palmitoylated proteins. In contrast to PPT2, PPT1 can hydrolyze palmitoylated proteins and palmitoylcysteine. The protein is Palmitoyl-protein thioesterase 1 (PPT1) of Homo sapiens (Human).